The following is a 540-amino-acid chain: NEDD8-activating enzyme E1 regulatory subunit AXR1 (540 aa).

It belongs to the ubiquitin-activating E1 family. ULA1 subfamily. Heterodimer of ECR1 and AXR1. The complex binds to RUB1/NEDD8 and RCE1. As to expression, expressed in shoot, root and floral meristems, in vascular tissues of cotyledons and mature leaves, and in the stele of the root. Expressed at higher levels on the lower side of an emerging root during germination and at higher levels on the underside of the apical hook.

The protein localises to the nucleus. It participates in protein modification; protein neddylation. In terms of biological role, regulatory subunit of the dimeric ECR1-AXR1 E1 enzyme. E1 activates RUB1/NEDD8 by first adenylating its C-terminal glycine residue with ATP, thereafter linking this residue to the side chain of the catalytic cysteine, yielding a RUB1-ECR1 thioester and free AMP. E1 finally transfers RUB1 to the catalytic cysteine of RCE1. Plays an important role in auxin response. Regulates the chromosomal localization of meiotic recombination by crossovers (COs) and subsequent synapsis, probably through the activation of a CRL4 complex. Required for E3-mediated protein degradation in response to auxin, jasmonic acid and cold stress. Required for the COP1-COP10-CSN-mediated repression of photomorphogenesis in the dark. May function redundantly with AXL1 in the RUB conjugating pathway. Seems not to be functionally equivalent to AXL1 in vivo. The sequence is that of NEDD8-activating enzyme E1 regulatory subunit AXR1 from Arabidopsis thaliana (Mouse-ear cress).